The following is a 469-amino-acid chain: MPSSSLAIRESPKLLKAQGSLLIAEPMKGVSYGEVVEVVLGSGETRLGQVIDVSRDATIIQVFGGVSDIDLKISKVRYRGETLKLPVSIDMLGRIFDGLGRPIDGGPPIVPEDYLDINGSPINPASRLPPSEFIETGISAIDGLNSIVRGQKLPIFSGSGLPHNRIAAQIVRQARVRGKEEKFAVVFAAIGVSYDDAMFFIENFKNYGALENAVAFINTADSPVIERIAIPRIALTAAEFLAWKHDMHVLAILTDMTNYCEALRELSAAREEVPSRRGYPGYMYTDLATIYERAGRVEGKKGSVTQMPILTMPNDDITHPIPDLTGYITEGQLVLSRQLWLKGIYPPFDILMSLSRLMKDGIGPGKTREDHRGVFMQLYSAYAEGVRLRELAVVVGTEALSARDRKYLEFADRFEKEFIGQGEYERRTIEETLDKGWELLAILPEDELKHVRIEHIRKYHPKYRGKTSR.

The protein belongs to the ATPase alpha/beta chains family. In terms of assembly, has multiple subunits with at least A(3), B(3), C, D, E, F, H, I and proteolipid K(x).

Its subcellular location is the cell membrane. Its function is as follows. Component of the A-type ATP synthase that produces ATP from ADP in the presence of a proton gradient across the membrane. The B chain is a regulatory subunit. This is A-type ATP synthase subunit B from Staphylothermus marinus (strain ATCC 43588 / DSM 3639 / JCM 9404 / F1).